The chain runs to 262 residues: Catechol O-methyltransferase domain-containing protein 1 (262 aa).

A helical; Signal-anchor for type II membrane protein transmembrane segment spans residues 12–32 (AALALGSAALGAAFATGLFLG). Residues D108, 110–111 (GT), S116, E134, V135, A163, D185, D187, and Y194 each bind S-adenosyl-L-methionine.

It belongs to the class I-like SAM-binding methyltransferase superfamily. Cation-dependent O-methyltransferase family. Homodimer.

Its subcellular location is the membrane. Functionally, putative O-methyltransferase. The protein is Catechol O-methyltransferase domain-containing protein 1 (COMTD1) of Homo sapiens (Human).